Reading from the N-terminus, the 352-residue chain is Delta(7)-sterol 5(6)-desaturas erg3A (352 aa).

The N-linked (GlcNAc...) asparagine glycan is linked to Asn39. 3 consecutive transmembrane segments (helical) span residues 82–102 (FLSF…ISAT), 128–147 (IAQT…PFLV), and 167–187 (YYSI…IYWI). Positions 174–299 (PLFIAFTDFC…FTTLWDRLGG (126 aa)) constitute a Fatty acid hydroxylase domain. Positions 188–192 (HRGLH) match the Histidine box-1 motif. Residues 201–205 (HKPHH) carry the Histidine box-2 motif. Residues 231 to 251 (HVFPFIFPLQKLAYVFLFGFI) form a helical membrane-spanning segment. Residues 276–280 (HTMHH) carry the Histidine box-3 motif.

The protein belongs to the sterol desaturase family. Fe cation is required as a cofactor.

It is found in the endoplasmic reticulum membrane. Delta(7)-sterol 5(6)-desaturase; part of the third module of ergosterol biosynthesis pathway that includes the late steps of the pathway. Erg3A is a minor delta(7)-sterol 5(6)-desaturase within the ergosterol pathway, erg3B being the major one. The third module or late pathway involves the ergosterol synthesis itself through consecutive reactions that mainly occur in the endoplasmic reticulum (ER) membrane. Firstly, the squalene synthase erg9 catalyzes the condensation of 2 farnesyl pyrophosphate moieties to form squalene, which is the precursor of all steroids. Squalene synthase is crucial for balancing the incorporation of farnesyl diphosphate (FPP) into sterol and nonsterol isoprene synthesis. Secondly, squalene is converted into lanosterol by the consecutive action of the squalene epoxidase erg1 and the lanosterol synthase erg7. Then, the delta(24)-sterol C-methyltransferase erg6 methylates lanosterol at C-24 to produce eburicol. Eburicol is the substrate of the sterol 14-alpha demethylase encoded by cyp51A and cyp51B, to yield 4,4,24-trimethyl ergosta-8,14,24(28)-trienol. The C-14 reductase erg24 then reduces the C14=C15 double bond which leads to 4,4-dimethylfecosterol. A sequence of further demethylations at C-4, involving the C-4 demethylation complex containing the C-4 methylsterol oxidases erg25A or erg25B, the sterol-4-alpha-carboxylate 3-dehydrogenase erg26 and the 3-keto-steroid reductase erg27, leads to the production of fecosterol via 4-methylfecosterol. The C-8 sterol isomerase erg2 then catalyzes the reaction which results in unsaturation at C-7 in the B ring of sterols and thus converts fecosterol to episterol. The sterol-C5-desaturase erg3B then catalyzes the introduction of a C-5 double bond in the B ring to produce 5-dehydroepisterol. The 2 other sterol-C5-desaturases, erg3A and erg3C, seem to be less important in ergosterol biosynthesis. The C-22 sterol desaturase erg5 further converts 5-dehydroepisterol into ergosta-5,7,22,24(28)-tetraen-3beta-ol by forming the C-22(23) double bond in the sterol side chain. Finally, ergosta-5,7,22,24(28)-tetraen-3beta-ol is substrate of the C-24(28) sterol reductases erg4A and erg4B to produce ergosterol. Possible alternative sterol biosynthetic pathways might exist from fecosterol to ergosterol, depending on the activities of the erg3 isoforms. The polypeptide is Delta(7)-sterol 5(6)-desaturas erg3A (Aspergillus fumigatus (strain ATCC MYA-4609 / CBS 101355 / FGSC A1100 / Af293) (Neosartorya fumigata)).